The following is a 159-amino-acid chain: NADH-quinone oxidoreductase subunit B (159 aa).

[4Fe-4S] cluster contacts are provided by Cys37, Cys38, Cys102, and Cys132.

Belongs to the complex I 20 kDa subunit family. In terms of assembly, NDH-1 is composed of 14 different subunits. Subunits NuoB, C, D, E, F, and G constitute the peripheral sector of the complex. [4Fe-4S] cluster is required as a cofactor.

The protein resides in the cell inner membrane. It catalyses the reaction a quinone + NADH + 5 H(+)(in) = a quinol + NAD(+) + 4 H(+)(out). NDH-1 shuttles electrons from NADH, via FMN and iron-sulfur (Fe-S) centers, to quinones in the respiratory chain. Couples the redox reaction to proton translocation (for every two electrons transferred, four hydrogen ions are translocated across the cytoplasmic membrane), and thus conserves the redox energy in a proton gradient. This is NADH-quinone oxidoreductase subunit B from Ruthia magnifica subsp. Calyptogena magnifica.